Reading from the N-terminus, the 953-residue chain is 26S proteasome non-ATPase regulatory subunit 1 (953 aa).

Residue methionine 1 is modified to N-acetylmethionine. Threonine 273 carries the phosphothreonine modification. The disordered stretch occupies residues 277–319 (SVPGSTNTGTVPGPEKDSDSMETEEKTAGAVAGKTPDASPEPK). Basic and acidic residues predominate over residues 290-303 (PEKDSDSMETEEKT). Residue lysine 310 is modified to N6-acetyllysine. Threonine 311 bears the Phosphothreonine mark. Residue serine 315 is modified to Phosphoserine. PC repeat units lie at residues 403–436 (TATA…PGSA), 441–474 (GGLY…DIVR), 476–510 (GGSL…VTGE), 511–545 (AAGL…EKIL), 547–580 (GLAV…ILRR), 581–616 (SGMY…DVRR), 617–649 (AAVE…PHVR), 651–685 (GAAM…YVRQ), 686–726 (GALI…DVMA), and 729–761 (GAIL…PSVV). Lysine 720 carries the N6-acetyllysine modification. A Phosphothreonine modification is found at threonine 830. The residue at position 834 (serine 834) is a Phosphoserine. Disordered stretches follow at residues 839–881 (AKKK…LDNP) and 930–953 (AHGP…YIDD). Basic and acidic residues-rich tracts occupy residues 842 to 852 (KEKEKEKKEEE) and 859 to 872 (AEKK…KEPE). The segment covering 936 to 953 (EEEEQEPEPPEPFEYIDD) has biased composition (acidic residues).

This sequence belongs to the proteasome subunit S1 family. In terms of assembly, component of the 19S proteasome regulatory particle complex. The 26S proteasome consists of a 20S core particle (CP) and two 19S regulatory subunits (RP). The regulatory particle is made of a lid composed of 9 subunits, a base containing 6 ATPases and few additional components including PSMD1. Interacts with ADRM1. Interacts with ZFAND1.

Functionally, component of the 26S proteasome, a multiprotein complex involved in the ATP-dependent degradation of ubiquitinated proteins. This complex plays a key role in the maintenance of protein homeostasis by removing misfolded or damaged proteins, which could impair cellular functions, and by removing proteins whose functions are no longer required. Therefore, the proteasome participates in numerous cellular processes, including cell cycle progression, apoptosis, or DNA damage repair. In Rattus norvegicus (Rat), this protein is 26S proteasome non-ATPase regulatory subunit 1 (Psmd1).